Consider the following 561-residue polypeptide: Probable galacturonosyltransferase 9 (561 aa).

At 1-27 the chain is on the cytoplasmic side; the sequence is MAVAFRGGRGGVGSGQSTGLRSFFSYR. The helical; Signal-anchor for type II membrane protein transmembrane segment at 28–48 threads the bilayer; that stretch reads IFISALFSFLFLATFSVVLNS. Residues 49 to 561 lie on the Lumenal side of the membrane; that stretch reads SRHQPHQDHT…EFVQMCNFGL (513 aa). N-linked (GlcNAc...) asparagine glycosylation is found at asparagine 124, asparagine 320, asparagine 346, and asparagine 426.

The protein belongs to the glycosyltransferase 8 family. As to expression, expressed in roots, inflorescences, siliques, leaves and stems.

The protein localises to the golgi apparatus membrane. It participates in glycan metabolism; pectin biosynthesis. Functionally, may be involved in pectin synthesis. This Arabidopsis thaliana (Mouse-ear cress) protein is Probable galacturonosyltransferase 9 (GAUT9).